Reading from the N-terminus, the 438-residue chain is ATP-dependent RNA helicase RhlB (438 aa).

The short motif at 9–37 (QRFADLPLHPEVKQALAENGFEFCTPIQA) is the Q motif element. Residues 40–219 (LPVLLQSKDI…YDHMNEPVKV (180 aa)) enclose the Helicase ATP-binding domain. 53-60 (AQTGTGKT) contributes to the ATP binding site. The short motif at 165 to 168 (DEAD) is the DEAD box element. In terms of domain architecture, Helicase C-terminal spans 243–390 (KMRLLLTLIE…VSNYDSEALL (148 aa)). The disordered stretch occupies residues 395–438 (TPAKIHRKHPSGTRNLRDRSGTSRPGAQRSGARPPRHDRTRRHS). Positions 428 to 438 (PPRHDRTRRHS) are enriched in basic residues.

It belongs to the DEAD box helicase family. RhlB subfamily. As to quaternary structure, component of the RNA degradosome, which is a multiprotein complex involved in RNA processing and mRNA degradation.

Its subcellular location is the cytoplasm. The enzyme catalyses ATP + H2O = ADP + phosphate + H(+). DEAD-box RNA helicase involved in RNA degradation. Has RNA-dependent ATPase activity and unwinds double-stranded RNA. The chain is ATP-dependent RNA helicase RhlB from Shewanella baltica (strain OS223).